Here is a 255-residue protein sequence, read N- to C-terminus: Diphthine synthase (255 aa).

S-adenosyl-L-methionine-binding positions include Leu9, Asp85, Val88, 113 to 114 (SI), Leu164, Ala207, and His232.

This sequence belongs to the diphthine synthase family. In terms of assembly, homodimer.

The catalysed reaction is 2-[(3S)-amino-3-carboxypropyl]-L-histidyl-[translation elongation factor 2] + 3 S-adenosyl-L-methionine = diphthine-[translation elongation factor 2] + 3 S-adenosyl-L-homocysteine + 3 H(+). Its pathway is protein modification; peptidyl-diphthamide biosynthesis. S-adenosyl-L-methionine-dependent methyltransferase that catalyzes the trimethylation of the amino group of the modified target histidine residue in translation elongation factor 2 (EF-2), to form an intermediate called diphthine. The three successive methylation reactions represent the second step of diphthamide biosynthesis. This is Diphthine synthase from Methanococcus maripaludis (strain C5 / ATCC BAA-1333).